The sequence spans 597 residues: Dynein intermediate chain 3, ciliary (597 aa).

7 WD repeats span residues 159-210 (EIKR…KPEF), 213-253 (KPVS…QAVE), 260-301 (SHHD…EPTE), 314-354 (ENAQ…PPEK), 361-400 (EHIG…SSIM), 404-444 (YHMS…KDPT), and 449-488 (VSDD…CTMQ). Disordered stretches follow at residues 512–546 (RQRE…VAAA) and 562–597 (AAQQ…EKEG). A compositionally biased stretch (acidic residues) spans 528-542 (QDDDEEGGPDEEEDL). Residues 584–597 (GSEKKDTENGEKEG) are compositionally biased toward basic and acidic residues.

Belongs to the dynein intermediate chain family. In terms of assembly, consists of at least two heavy chains (alpha and beta), three intermediate chains and several light chains.

Its subcellular location is the cytoplasm. The protein resides in the cytoskeleton. It localises to the cilium axoneme. In terms of biological role, may play a role in the regulation of dynein heavy chain activity. The chain is Dynein intermediate chain 3, ciliary from Heliocidaris crassispina (Sea urchin).